Consider the following 184-residue polypeptide: MDLSGSLLIAMPSMADPRFERSLVLICAHSPDGAMGLVINKPVEDLSFAGMLEQLNIPRAPNGRDIRVHLGGPMERGRGFVLHSPDYMSVGATMLVSGKFGMTATVDILEALARGQGPSSALMALGYSGWGPGQLEAEVQRNDWLTAEAPSELVFSDDDPGKWTGMLRHMGIDPLTLSSTAGHA.

Belongs to the UPF0301 (AlgH) family.

The polypeptide is UPF0301 protein Rsph17029_2659 (Cereibacter sphaeroides (strain ATCC 17029 / ATH 2.4.9) (Rhodobacter sphaeroides)).